The following is an 842-amino-acid chain: Translation initiation factor IF-2 (842 aa).

A disordered region spans residues 94–259 (QRSPEEIQAE…HGFQNPTGPV (166 aa)). Over residues 96–138 (SPEEIQAEQKRELDERRAAENAARDKVEAEVRQRNEEQARRQA) the composition is skewed to basic and acidic residues. A compositionally biased stretch (low complexity) spans 139–148 (ADSAVAAPAP). The segment covering 149–159 (AAKPEPAPAAA) has biased composition (pro residues). The span at 160–172 (PAPVVADAPASED) shows a compositional bias: low complexity. Basic and acidic residues-rich tracts occupy residues 173–202 (AAAR…RGEA) and 226–235 (TTDEESDGAR). Residues 236-249 (RGRGGKGKLKKRNQ) show a composition bias toward basic residues. The 168-residue stretch at 342-509 (SRAPVVTVMG…AVLLQAEILE (168 aa)) folds into the tr-type G domain. The G1 stretch occupies residues 351–358 (GHVDHGKT). Position 351–358 (351–358 (GHVDHGKT)) interacts with GTP. The interval 376–380 (GITQH) is G2. Residues 397–400 (DTPG) are G3. Residues 397 to 401 (DTPGH) and 451 to 454 (NKID) contribute to the GTP site. A G4 region spans residues 451–454 (NKID). The interval 487-489 (SAK) is G5.

This sequence belongs to the TRAFAC class translation factor GTPase superfamily. Classic translation factor GTPase family. IF-2 subfamily.

It localises to the cytoplasm. One of the essential components for the initiation of protein synthesis. Protects formylmethionyl-tRNA from spontaneous hydrolysis and promotes its binding to the 30S ribosomal subunits. Also involved in the hydrolysis of GTP during the formation of the 70S ribosomal complex. The chain is Translation initiation factor IF-2 from Pseudomonas putida (strain GB-1).